Reading from the N-terminus, the 184-residue chain is Thymidine kinase (184 aa).

Residues 9–16 and 82–85 contribute to the ATP site; these read AAMNSGKS and DEAQ. Glu-83 acts as the Proton acceptor in catalysis. Zn(2+)-binding residues include Cys-140, Cys-142, Cys-177, and Cys-180.

It belongs to the thymidine kinase family. In terms of assembly, homotetramer.

It localises to the cytoplasm. It carries out the reaction thymidine + ATP = dTMP + ADP + H(+). The polypeptide is Thymidine kinase (Chromobacterium violaceum (strain ATCC 12472 / DSM 30191 / JCM 1249 / CCUG 213 / NBRC 12614 / NCIMB 9131 / NCTC 9757 / MK)).